A 91-amino-acid polypeptide reads, in one-letter code: Small ribosomal subunit protein uS19 (91 aa).

The segment at 1-32 (MPRSIKKGPFIDEHLDRKVQSAQASNSRRPIK) is disordered. A compositionally biased stretch (basic and acidic residues) spans 9 to 19 (PFIDEHLDRKV).

This sequence belongs to the universal ribosomal protein uS19 family.

Protein S19 forms a complex with S13 that binds strongly to the 16S ribosomal RNA. This Acidithiobacillus ferrooxidans (strain ATCC 53993 / BNL-5-31) (Leptospirillum ferrooxidans (ATCC 53993)) protein is Small ribosomal subunit protein uS19.